Here is a 177-residue protein sequence, read N- to C-terminus: Large ribosomal subunit protein uL10 (177 aa).

Belongs to the universal ribosomal protein uL10 family. Part of the ribosomal stalk of the 50S ribosomal subunit. The N-terminus interacts with L11 and the large rRNA to form the base of the stalk. The C-terminus forms an elongated spine to which L12 dimers bind in a sequential fashion forming a multimeric L10(L12)X complex.

Its function is as follows. Forms part of the ribosomal stalk, playing a central role in the interaction of the ribosome with GTP-bound translation factors. The sequence is that of Large ribosomal subunit protein uL10 from Legionella pneumophila (strain Paris).